Reading from the N-terminus, the 194-residue chain is Cathelicidin-related peptide isoform 3 (194 aa).

The signal sequence occupies residues 1-22 (MQGFFWKTWLVLAVCGTPASLA). Positions 23 to 164 (HRPLSYGEAL…DQPKRVKRFK (142 aa)) are excised as a propeptide. Intrachain disulfides connect Cys-79/Cys-90 and Cys-101/Cys-118. Acidic residues predominate over residues 125-145 (EEEEEEEEEEQKAEAENDEEV). The segment at 125–156 (EEEEEEEEEEQKAEAENDEEVEKEKGDEEKDQ) is disordered. A compositionally biased stretch (basic and acidic residues) spans 146 to 156 (EKEKGDEEKDQ).

Belongs to the cathelicidin family. In terms of tissue distribution, expressed by the venom gland.

It is found in the secreted. The protein localises to the target cell membrane. In terms of biological role, potent antimicrobial peptide against Gram-negative and Gram-positive bacteria. Adopts an amphipathic alpha helical conformation, that may allow to partition into the target membrane. Low hemolytic activities have been observed on mammalian cells. This Crotalus durissus cascavella (Northeastern Brazilian rattlesnake) protein is Cathelicidin-related peptide isoform 3.